We begin with the raw amino-acid sequence, 820 residues long: Serine/threonine-protein phosphatase 4 regulatory subunit 3B (820 aa).

The 100-residue stretch at 1 to 100 folds into the WH1 domain; it reads MSDTRRRVKV…DEIWEKICQV (100 aa). Ser-117 and Ser-663 each carry phosphoserine. Positions 687–820 are disordered; the sequence is EDDDEEGKAV…SPRKRPRLGS (134 aa). The span at 701–732 shows a compositional bias: basic and acidic residues; that stretch reads EKSKTEDDFPDSYEKFMETKKAKESEDKENLP. Over residues 744 to 789 the composition is skewed to polar residues; that stretch reads FSHSPSATNGTNSTNSKSVVSQTTPASSNVASSKTTSLATSVTATK. The segment covering 798–809 has biased composition (acidic residues); it reads YPDDEEEDEEEE. Ser-811 is subject to Phosphoserine.

The protein belongs to the SMEK family. In terms of assembly, serine/threonine-protein phosphatase 4 (PP4) occurs in different assemblies of the catalytic and one or more regulatory subunits. Component of the PP4 complex PPP4C-PPP4R2-PPP4R3B.

It localises to the cytoplasm. It is found in the cytoskeleton. Its subcellular location is the microtubule organizing center. The protein resides in the centrosome. The protein localises to the nucleus. Regulatory subunit of serine/threonine-protein phosphatase 4 (PP4). May regulate the activity of PPP4C at centrosomal microtubule organizing centers. This Mus musculus (Mouse) protein is Serine/threonine-protein phosphatase 4 regulatory subunit 3B.